The following is a 465-amino-acid chain: Zinc finger CCCH domain-containing protein 58 (465 aa).

The disordered stretch occupies residues 1 to 26 (MERYGGAGEDESRSDPSHEWSAQGTE). C3H1-type zinc fingers lie at residues 51-79 (RPDEPDCIYYLRTGVCGYGSRCRFNHPRN), 97-125 (RMGQPVCQHFMRTGTCKFGASCKYHHPRQ), and 145-173 (RPGEKECSYFMRTGQCKFGSTCRYHHPVP). 2 disordered regions span residues 173-200 (PPGVQAPSQQQQQQLSAGPTMYPSLQSQ) and 274-302 (LSPSAPAYQSGPSSTGVSNKEQTFPQRPE). The segment covering 177–191 (QAPSQQQQQQLSAGP) has biased composition (low complexity). A compositionally biased stretch (polar residues) spans 283–298 (SGPSSTGVSNKEQTFP). 2 consecutive C3H1-type zinc fingers follow at residues 300–328 (RPEQPECQYFMRTGDCKFGTSCRFHHPME) and 345–373 (RPGAVPCTHFAQHGICKFGPACKFDHSLG). Low complexity predominate over residues 397–431 (SLGTLAPSSSSDQCTELISSSSIEPITTTTGGSET). The segment at 397 to 465 (SLGTLAPSSS…SASNEAKTSS (69 aa)) is disordered. Over residues 444 to 453 (SHPEPAETNK) the composition is skewed to basic and acidic residues. Residues 454–465 (GDSASNEAKTSS) show a composition bias toward polar residues.

Its subcellular location is the nucleus. The polypeptide is Zinc finger CCCH domain-containing protein 58 (Arabidopsis thaliana (Mouse-ear cress)).